The primary structure comprises 464 residues: Phospho-cellobiase (464 aa).

Catalysis depends on E172, which acts as the Proton donor. The active-site Nucleophile is E361.

This sequence belongs to the glycosyl hydrolase 1 family.

The chain is Phospho-cellobiase (casB) from Klebsiella oxytoca.